The following is a 137-amino-acid chain: Proofreading thioesterase EntH (137 aa).

Glutamate 63 (nucleophile or proton acceptor) is an active-site residue.

This sequence belongs to the thioesterase PaaI family. As to quaternary structure, homotetramer. Dimer of dimers. Interacts specifically with the aryl carrier protein (ArCP) domain of EntB.

The protein localises to the cytoplasm. It participates in siderophore biosynthesis; enterobactin biosynthesis. Its function is as follows. Required for optimal enterobactin synthesis. Acts as a proofreading enzyme that prevents EntB misacylation by hydrolyzing the thioester bound existing between EntB and wrongly charged molecules. This Salmonella paratyphi A (strain AKU_12601) protein is Proofreading thioesterase EntH.